Here is a 461-residue protein sequence, read N- to C-terminus: Fumarate hydratase class II (461 aa).

Residues 97–99, 127–130, 137–139, and T185 each bind substrate; these read SGT, HPND, and SSN. The Proton donor/acceptor role is filled by H186. S316 is a catalytic residue. Substrate is bound by residues S317 and 322–324; that span reads KVN.

This sequence belongs to the class-II fumarase/aspartase family. Fumarase subfamily. Homotetramer.

Its subcellular location is the cytoplasm. The catalysed reaction is (S)-malate = fumarate + H2O. The protein operates within carbohydrate metabolism; tricarboxylic acid cycle; (S)-malate from fumarate: step 1/1. Involved in the TCA cycle. Catalyzes the stereospecific interconversion of fumarate to L-malate. This is Fumarate hydratase class II from Staphylococcus haemolyticus (strain JCSC1435).